A 398-amino-acid chain; its full sequence is Glucose-1-phosphate adenylyltransferase (398 aa).

Alpha-D-glucose 1-phosphate is bound by residues tyrosine 100, glycine 165, 180 to 181 (EK), and serine 191.

It belongs to the bacterial/plant glucose-1-phosphate adenylyltransferase family. As to quaternary structure, homotetramer.

It carries out the reaction alpha-D-glucose 1-phosphate + ATP + H(+) = ADP-alpha-D-glucose + diphosphate. It functions in the pathway glycan biosynthesis; glycogen biosynthesis. Its function is as follows. Involved in the biosynthesis of ADP-glucose, a building block required for the elongation reactions to produce glycogen. Catalyzes the reaction between ATP and alpha-D-glucose 1-phosphate (G1P) to produce pyrophosphate and ADP-Glc. In Desulfitobacterium hafniense (strain DSM 10664 / DCB-2), this protein is Glucose-1-phosphate adenylyltransferase.